The sequence spans 393 residues: S-adenosylmethionine synthase 1 (393 aa).

Glu-9 lines the Mg(2+) pocket. His-15 provides a ligand contact to ATP. Glu-43 is a K(+) binding site. Positions 56 and 99 each coordinate L-methionine. ATP is bound by residues 167-169 (DGK), 235-238 (SGRF), Asp-246, 252-253 (RK), Ala-269, Lys-273, and Lys-277. Residue Asp-246 participates in L-methionine binding. Residue Lys-277 participates in L-methionine binding.

It belongs to the AdoMet synthase family. Homotetramer. The cofactor is Mn(2+). It depends on Mg(2+) as a cofactor. Requires Co(2+) as cofactor. K(+) serves as cofactor. Mostly expressed in stems.

It is found in the cytoplasm. It carries out the reaction L-methionine + ATP + H2O = S-adenosyl-L-methionine + phosphate + diphosphate. The protein operates within amino-acid biosynthesis; S-adenosyl-L-methionine biosynthesis; S-adenosyl-L-methionine from L-methionine: step 1/1. In terms of biological role, catalyzes the formation of S-adenosylmethionine from methionine and ATP. The reaction comprises two steps that are both catalyzed by the same enzyme: formation of S-adenosylmethionine (AdoMet) and triphosphate, and subsequent hydrolysis of the triphosphate. This Solanum lycopersicum (Tomato) protein is S-adenosylmethionine synthase 1 (SAM1).